We begin with the raw amino-acid sequence, 433 residues long: Glutamate-1-semialdehyde 2,1-aminomutase (433 aa).

Lys272 carries the N6-(pyridoxal phosphate)lysine modification.

The protein belongs to the class-III pyridoxal-phosphate-dependent aminotransferase family. HemL subfamily. Homodimer. Pyridoxal 5'-phosphate serves as cofactor.

The protein localises to the cytoplasm. It carries out the reaction (S)-4-amino-5-oxopentanoate = 5-aminolevulinate. The protein operates within porphyrin-containing compound metabolism; protoporphyrin-IX biosynthesis; 5-aminolevulinate from L-glutamyl-tRNA(Glu): step 2/2. In Magnetococcus marinus (strain ATCC BAA-1437 / JCM 17883 / MC-1), this protein is Glutamate-1-semialdehyde 2,1-aminomutase.